A 182-amino-acid polypeptide reads, in one-letter code: NADH-quinone oxidoreductase subunit I (182 aa).

2 4Fe-4S ferredoxin-type domains span residues 52-82 (LTRD…LQKA) and 92-121 (DFFR…LTPD). Residues C62, C65, C68, C72, C101, C104, C107, and C111 each contribute to the [4Fe-4S] cluster site.

The protein belongs to the complex I 23 kDa subunit family. NDH-1 is composed of 13 different subunits. Subunits NuoA, H, J, K, L, M, N constitute the membrane sector of the complex. [4Fe-4S] cluster is required as a cofactor.

It localises to the cell inner membrane. It catalyses the reaction a quinone + NADH + 5 H(+)(in) = a quinol + NAD(+) + 4 H(+)(out). In terms of biological role, NDH-1 shuttles electrons from NADH, via FMN and iron-sulfur (Fe-S) centers, to quinones in the respiratory chain. The immediate electron acceptor for the enzyme in this species is believed to be ubiquinone. Couples the redox reaction to proton translocation (for every two electrons transferred, four hydrogen ions are translocated across the cytoplasmic membrane), and thus conserves the redox energy in a proton gradient. The polypeptide is NADH-quinone oxidoreductase subunit I (Pseudomonas fluorescens (strain ATCC BAA-477 / NRRL B-23932 / Pf-5)).